Reading from the N-terminus, the 213-residue chain is Penicillin-binding protein activator LpoB (213 aa).

An N-terminal signal peptide occupies residues 1 to 19 (MTKMSRYALITALAMFLAG). Residue Cys-20 is the site of N-palmitoyl cysteine attachment. A lipid anchor (S-diacylglycerol cysteine) is attached at Cys-20. Positions 28-74 (PVEEVKPAPEQPAEPQQPVPTVPSVPTIPQQPGPIEHEDQTAPPAPH) are disordered. Over residues 36 to 50 (PEQPAEPQQPVPTVP) the composition is skewed to pro residues.

Belongs to the LpoB family. As to quaternary structure, interacts with PBP1b.

The protein localises to the cell outer membrane. Its function is as follows. Regulator of peptidoglycan synthesis that is essential for the function of penicillin-binding protein 1B (PBP1b). The polypeptide is Penicillin-binding protein activator LpoB (Escherichia coli O157:H7).